A 572-amino-acid polypeptide reads, in one-letter code: Urease subunit alpha (572 aa).

A Urease domain is found at 136–572 (GGIDTHIHFI…VPLGQRYFLF (437 aa)). Ni(2+) contacts are provided by histidine 141, histidine 143, and lysine 224. Lysine 224 carries the N6-carboxylysine modification. Histidine 226 serves as a coordination point for substrate. Histidine 253 and histidine 279 together coordinate Ni(2+). The Proton donor role is filled by histidine 327. Aspartate 367 is a binding site for Ni(2+).

Belongs to the metallo-dependent hydrolases superfamily. Urease alpha subunit family. As to quaternary structure, heterotrimer of UreA (gamma), UreB (beta) and UreC (alpha) subunits. Three heterotrimers associate to form the active enzyme. Requires Ni cation as cofactor. Carboxylation allows a single lysine to coordinate two nickel ions.

The protein resides in the cytoplasm. It catalyses the reaction urea + 2 H2O + H(+) = hydrogencarbonate + 2 NH4(+). Its pathway is nitrogen metabolism; urea degradation; CO(2) and NH(3) from urea (urease route): step 1/1. This chain is Urease subunit alpha, found in Haemophilus influenzae (strain ATCC 51907 / DSM 11121 / KW20 / Rd).